A 720-amino-acid chain; its full sequence is Ornithine decarboxylase (720 aa).

K354 is modified (N6-(pyridoxal phosphate)lysine).

It belongs to the Orn/Lys/Arg decarboxylase class-I family. Pyridoxal 5'-phosphate is required as a cofactor.

The enzyme catalyses L-ornithine + H(+) = putrescine + CO2. This is Ornithine decarboxylase (speF) from Haemophilus influenzae (strain ATCC 51907 / DSM 11121 / KW20 / Rd).